The sequence spans 280 residues: Diaminopimelate epimerase (280 aa).

2 residues coordinate substrate: N13 and N67. C76 (proton donor) is an active-site residue. Substrate-binding positions include 77–78, N191, and 208–209; these read GN and ER. C218 functions as the Proton acceptor in the catalytic mechanism. 219-220 contributes to the substrate binding site; the sequence is GT.

Belongs to the diaminopimelate epimerase family. As to quaternary structure, homodimer.

The protein resides in the cytoplasm. It carries out the reaction (2S,6S)-2,6-diaminopimelate = meso-2,6-diaminopimelate. Its pathway is amino-acid biosynthesis; L-lysine biosynthesis via DAP pathway; DL-2,6-diaminopimelate from LL-2,6-diaminopimelate: step 1/1. Catalyzes the stereoinversion of LL-2,6-diaminopimelate (L,L-DAP) to meso-diaminopimelate (meso-DAP), a precursor of L-lysine. The protein is Diaminopimelate epimerase of Archaeoglobus fulgidus (strain ATCC 49558 / DSM 4304 / JCM 9628 / NBRC 100126 / VC-16).